The chain runs to 295 residues: Protein gurken (295 aa).

The signal sequence occupies residues 1–26; it reads MMQIPFTRIFKVIFVLSTIVAVTDCC. Over 27-247 the chain is Extracellular; sequence SSRILLLREH…TAQRKVRMAH (221 aa). 2 disordered regions span residues 78-111 and 124-175; these read EASA…SIAA and TDTW…NDKE. Residues 124-139 are compositionally biased toward polar residues; that stretch reads TDTWLASESSTPITDS. 2 stretches are compositionally biased toward low complexity: residues 140 to 152 and 159 to 171; these read ETVT…THTG and SSSS…TPSP. One can recognise an EGF-like domain in the interval 179–224; the sequence is QMLPCSEAYNTSFCLNGGHCFQHPMVNNTVFHSCLCVNDYDGERCA. 3 cysteine pairs are disulfide-bonded: Cys183/Cys198, Cys192/Cys212, and Cys214/Cys223. 2 N-linked (GlcNAc...) asparagine glycosylation sites follow: Asn188 and Asn205. The interaction with cni stretch occupies residues 215 to 245; the sequence is VNDYDGERCAYKSWNGDYIYSPPTAQRKVRM. A helical membrane pass occupies residues 248-268; it reads IVFSFPVLLMLSSLYVLFAAV. The Cytoplasmic segment spans residues 269–295; the sequence is FMLRNVPDYRRKQQQLHLHKQRFFVRC.

As to quaternary structure, interacts with cni. In terms of tissue distribution, expressed in nurse cells and oocyte up to oogenesis stage 7. Specifically accumulates in dorsal anterior corner of the oocyte during stages 9/10, at later stages expression is seen as an anterior ring. In stage 10 ovaries, it is concentrated between the oocyte nucleus and the adjacent oolemma. During vitellogenesis stage it can be detected at the oocyte surface, especially on the microvilli. It is also found at the microvilli covering the apical surface of the follicular epithelium and within follicle cells.

The protein localises to the cell membrane. Critical for defining the anterior-posterior and dorsal-ventral axes of the egg. May signal directly to dorsal follicle cells through the receptor torpedo (top). During oogenesis this signaling pathway instructs follicle cells to follow a dorsal pathway of development rather than the default ventral pathway. This is Protein gurken (grk) from Drosophila melanogaster (Fruit fly).